The chain runs to 200 residues: Pyrrolidone-carboxylate peptidase (200 aa).

Active-site residues include Glu79, Cys142, and His166.

The protein belongs to the peptidase C15 family. Homotetramer.

The protein resides in the cytoplasm. The catalysed reaction is Release of an N-terminal pyroglutamyl group from a polypeptide, the second amino acid generally not being Pro.. Its function is as follows. Removes 5-oxoproline from various penultimate amino acid residues except L-proline. In Pyrococcus abyssi (strain GE5 / Orsay), this protein is Pyrrolidone-carboxylate peptidase (pcp).